The sequence spans 131 residues: MAKPGNKTATKKKVKKTVIDGVAHIHASFNNTIVTITDRQGNALAWATSGGSGFRGSRKSTPFAAQVAAERAGEAAKEYGLKNLDVEVKGPGPGRESAVRALNNVGYKITNITDVTPIPHNGCRPPKKRRV.

The protein belongs to the universal ribosomal protein uS11 family. As to quaternary structure, part of the 30S ribosomal subunit. Interacts with proteins S7 and S18. Binds to IF-3.

Located on the platform of the 30S subunit, it bridges several disparate RNA helices of the 16S rRNA. Forms part of the Shine-Dalgarno cleft in the 70S ribosome. The protein is Small ribosomal subunit protein uS11 of Cellvibrio japonicus (strain Ueda107) (Pseudomonas fluorescens subsp. cellulosa).